Consider the following 420-residue polypeptide: Protein disulfide isomerase CRELD1 (420 aa).

The N-terminal stretch at 1–29 (MAPWPPKGLVPAMLWGLSLFLNLPGPIWL) is a signal peptide. Residues 30–362 (QPSPPPQSSP…GFFSEMTEDE (333 aa)) lie on the Extracellular side of the membrane. A CXXC motif is present at residues 46-49 (CHTC). The cysteines at positions 46 and 49 are disulfide-linked. Asparagine 79 is a glycosylation site (N-linked (GlcNAc...) asparagine). The EGF-like 1 domain maps to 153-193 (LPCPGGTERPCGGYGQCEGEGTRGGSGHCDCQAGYGGEACG). 3 cysteine pairs are disulfide-bonded: cysteine 155–cysteine 169, cysteine 163–cysteine 181, and cysteine 183–cysteine 192. Asparagine 205 is a glycosylation site (N-linked (GlcNAc...) asparagine). FU repeat units lie at residues 208–256 (HLVC…GANC) and 268–315 (SYEC…EVCP). The short motif at 278–281 (CLGC) is the CXXC element. 4 cysteine pairs are disulfide-bonded: cysteine 278–cysteine 281, cysteine 309–cysteine 321, cysteine 314–cysteine 330, and cysteine 332–cysteine 343. The EGF-like 2; calcium-binding domain maps to 305 to 344 (DVDECETEVCPGENKQCENTEGGYRCICAEGYKQMEGICV). Residues 363–383 (LVVLQQMFFGIIICALATLAA) traverse the membrane as a helical segment. A topological domain (cytoplasmic) is located at residue lysine 384. The helical transmembrane segment at 385–405 (GDLVFTAIFIGAVAAMTGYWL) threads the bilayer. The Extracellular segment spans residues 406 to 420 (SERSDRVLEGFIKGR).

The protein belongs to the CRELD family. In terms of tissue distribution, highly expressed in fetal lung, liver, kidney, adult heart, brain and skeletal muscle. Weakly expressed in placenta, fetal brain, and adult lung, liver, kidney and pancreas.

The protein resides in the membrane. The catalysed reaction is Catalyzes the rearrangement of -S-S- bonds in proteins.. Its function is as follows. Protein disulfide isomerase. Promotes the localization of acetylcholine receptors (AChRs) to the plasma membrane. The chain is Protein disulfide isomerase CRELD1 (CRELD1) from Homo sapiens (Human).